Reading from the N-terminus, the 37-residue chain is Cytochrome b6-f complex subunit 5 (37 aa).

Residues 5–25 traverse the membrane as a helical segment; it reads LLSGIVLGMITVSALGLFVAA.

Belongs to the PetG family. In terms of assembly, the 4 large subunits of the cytochrome b6-f complex are cytochrome b6, subunit IV (17 kDa polypeptide, PetD), cytochrome f and the Rieske protein, while the 4 small subunits are PetG, PetL, PetM and PetN. The complex functions as a dimer.

It localises to the plastid. It is found in the chloroplast thylakoid membrane. In terms of biological role, component of the cytochrome b6-f complex, which mediates electron transfer between photosystem II (PSII) and photosystem I (PSI), cyclic electron flow around PSI, and state transitions. PetG is required for either the stability or assembly of the cytochrome b6-f complex. The polypeptide is Cytochrome b6-f complex subunit 5 (Trieres chinensis (Marine centric diatom)).